A 463-amino-acid polypeptide reads, in one-letter code: Exodeoxyribonuclease 7 large subunit (463 aa).

This sequence belongs to the XseA family. As to quaternary structure, heterooligomer composed of large and small subunits.

It localises to the cytoplasm. It carries out the reaction Exonucleolytic cleavage in either 5'- to 3'- or 3'- to 5'-direction to yield nucleoside 5'-phosphates.. Bidirectionally degrades single-stranded DNA into large acid-insoluble oligonucleotides, which are then degraded further into small acid-soluble oligonucleotides. The protein is Exodeoxyribonuclease 7 large subunit of Bordetella bronchiseptica (strain ATCC BAA-588 / NCTC 13252 / RB50) (Alcaligenes bronchisepticus).